The sequence spans 343 residues: MLTNRQLLILQVIINDFIRSAQPVGSRTLSKKEDITFSSATIRNEMADLEELGFIEKTHSSSGRIPSEKGYRYYVDHLLSPRKLSSNELVLIQSAFQEKIFELEKTVQKSAEILSDLTNYTSIVLGPKLSENRLKQIQLVPVQPNKAVAIMITDSGHVENKTITFSEHLDVSDIEKLMNILNSRLAGVPMDQLKDRMYKEVVMLLRTHLKDYDHILDALGNTFTSTQNESKLFFGGKINMLNQPEFHDIDRIRSLMMLIEQKNDVMQLFHPNQQGITIKIGSENNLEAMENCSLITATYSIDQKSLGSIAVIGPTRMDYGRVVSLLHHVSKDLSNALSNLYDE.

The protein belongs to the HrcA family.

In terms of biological role, negative regulator of class I heat shock genes (grpE-dnaK-dnaJ and groELS operons). Prevents heat-shock induction of these operons. This chain is Heat-inducible transcription repressor HrcA, found in Bacillus pumilus (strain SAFR-032).